The sequence spans 753 residues: 5-methyltetrahydropteroyltriglutamate--homocysteine methyltransferase (753 aa).

Residues 17–20 (RELK) and K117 contribute to the 5-methyltetrahydropteroyltri-L-glutamate site. L-homocysteine is bound by residues 431 to 433 (IGS) and E484. Residues 431-433 (IGS) and E484 each bind L-methionine. Residues 515–516 (RC) and W561 contribute to the 5-methyltetrahydropteroyltri-L-glutamate site. An L-homocysteine-binding site is contributed by D599. Residue D599 participates in L-methionine binding. E605 provides a ligand contact to 5-methyltetrahydropteroyltri-L-glutamate. Positions 641, 643, and 665 each coordinate Zn(2+). H694 (proton donor) is an active-site residue. C726 is a binding site for Zn(2+).

Belongs to the vitamin-B12 independent methionine synthase family. Zn(2+) serves as cofactor.

The catalysed reaction is 5-methyltetrahydropteroyltri-L-glutamate + L-homocysteine = tetrahydropteroyltri-L-glutamate + L-methionine. It functions in the pathway amino-acid biosynthesis; L-methionine biosynthesis via de novo pathway; L-methionine from L-homocysteine (MetE route): step 1/1. Functionally, catalyzes the transfer of a methyl group from 5-methyltetrahydrofolate to homocysteine resulting in methionine formation. This Escherichia coli O7:K1 (strain IAI39 / ExPEC) protein is 5-methyltetrahydropteroyltriglutamate--homocysteine methyltransferase.